The following is a 70-amino-acid chain: DNA-directed RNA polymerase subunit epsilon (70 aa).

This sequence belongs to the RNA polymerase subunit epsilon family. As to quaternary structure, RNAP is composed of a core of 2 alpha, a beta and a beta' subunit. The core is associated with a delta subunit, and at least one of epsilon or omega. When a sigma factor is associated with the core the holoenzyme is formed, which can initiate transcription.

The catalysed reaction is RNA(n) + a ribonucleoside 5'-triphosphate = RNA(n+1) + diphosphate. Its function is as follows. A non-essential component of RNA polymerase (RNAP). In Bacillus cereus (strain ZK / E33L), this protein is DNA-directed RNA polymerase subunit epsilon.